A 328-amino-acid polypeptide reads, in one-letter code: GTP 3',8-cyclase (328 aa).

The Radical SAM core domain maps to 1–229; that stretch reads MNQVDYLRIS…DAQVRGAGPA (229 aa). Arg-8 provides a ligand contact to GTP. [4Fe-4S] cluster is bound by residues Cys-15 and Cys-19. S-adenosyl-L-methionine is bound at residue Tyr-21. Cys-22 is a binding site for [4Fe-4S] cluster. Arg-60 is a binding site for GTP. Gly-64 provides a ligand contact to S-adenosyl-L-methionine. Thr-91 lines the GTP pocket. Position 115 (Ser-115) interacts with S-adenosyl-L-methionine. Position 155 (Lys-155) interacts with GTP. An S-adenosyl-L-methionine-binding site is contributed by Met-189. Residues Cys-252 and Cys-255 each coordinate [4Fe-4S] cluster. A GTP-binding site is contributed by 257-259; sequence RMR. A [4Fe-4S] cluster-binding site is contributed by Cys-269.

It belongs to the radical SAM superfamily. MoaA family. In terms of assembly, monomer and homodimer. The cofactor is [4Fe-4S] cluster.

The catalysed reaction is GTP + AH2 + S-adenosyl-L-methionine = (8S)-3',8-cyclo-7,8-dihydroguanosine 5'-triphosphate + 5'-deoxyadenosine + L-methionine + A + H(+). It participates in cofactor biosynthesis; molybdopterin biosynthesis. In terms of biological role, catalyzes the cyclization of GTP to (8S)-3',8-cyclo-7,8-dihydroguanosine 5'-triphosphate. This chain is GTP 3',8-cyclase, found in Nostoc sp. (strain PCC 7120 / SAG 25.82 / UTEX 2576).